The chain runs to 530 residues: Ubiquitin carboxyl-terminal hydrolase 17-like protein 19 (530 aa).

The USP domain occupies 80–375 (AGLQNMGNTC…QAYVLFYIQK (296 aa)). The Nucleophile role is filled by Cys89. His334 functions as the Proton acceptor in the catalytic mechanism. 2 stretches are compositionally biased toward basic and acidic residues: residues 382-392 (SESVSRGREPR) and 398-413 (DTDRRATQGELKRDHP). Disordered regions lie at residues 382–413 (SESVSRGREPRALGAEDTDRRATQGELKRDHP) and 476–530 (KNHH…LVCQ). Residues 484-495 (SSLLKLSSTTPT) are compositionally biased toward low complexity. The segment covering 496–505 (HQESMNTGTL) has biased composition (polar residues). Positions 510–524 (GRARRSKGKNKHSKR) are enriched in basic residues.

It belongs to the peptidase C19 family. USP17 subfamily.

The protein localises to the nucleus. The protein resides in the endoplasmic reticulum. It carries out the reaction Thiol-dependent hydrolysis of ester, thioester, amide, peptide and isopeptide bonds formed by the C-terminal Gly of ubiquitin (a 76-residue protein attached to proteins as an intracellular targeting signal).. Its function is as follows. Deubiquitinating enzyme that removes conjugated ubiquitin from specific proteins to regulate different cellular processes that may include cell proliferation, progression through the cell cycle, apoptosis, cell migration, and the cellular response to viral infection. The polypeptide is Ubiquitin carboxyl-terminal hydrolase 17-like protein 19 (USP17L19) (Homo sapiens (Human)).